Consider the following 375-residue polypeptide: tRNA-specific 2-thiouridylase MnmA 3 (375 aa).

ATP-binding positions include 11–18 (GMSGGIDS) and Met37. Residue Cys104 is the Nucleophile of the active site. Cysteines 104 and 201 form a disulfide. Gly128 contacts ATP. An interaction with tRNA region spans residues 150–152 (KDQ). Cys201 acts as the Cysteine persulfide intermediate in catalysis. The interval 309–310 (RY) is interaction with tRNA.

The protein belongs to the MnmA/TRMU family.

It localises to the cytoplasm. It carries out the reaction S-sulfanyl-L-cysteinyl-[protein] + uridine(34) in tRNA + AH2 + ATP = 2-thiouridine(34) in tRNA + L-cysteinyl-[protein] + A + AMP + diphosphate + H(+). Its function is as follows. Catalyzes the 2-thiolation of uridine at the wobble position (U34) of tRNA, leading to the formation of s(2)U34. The protein is tRNA-specific 2-thiouridylase MnmA 3 of Phocaeicola vulgatus (strain ATCC 8482 / DSM 1447 / JCM 5826 / CCUG 4940 / NBRC 14291 / NCTC 11154) (Bacteroides vulgatus).